The primary structure comprises 452 residues: Tubulin alpha-1 chain (452 aa).

Glutamine 11 contacts GTP. An N6-acetyllysine modification is found at lysine 40. GTP is bound by residues glutamate 71, serine 140, glycine 144, threonine 145, threonine 179, asparagine 206, and asparagine 228. Glutamate 71 serves as a coordination point for Mg(2+). The active site involves glutamate 254. Positions glutamate 433–tyrosine 452 are disordered.

Belongs to the tubulin family. Dimer of alpha and beta chains. A typical microtubule is a hollow water-filled tube with an outer diameter of 25 nm and an inner diameter of 15 nM. Alpha-beta heterodimers associate head-to-tail to form protofilaments running lengthwise along the microtubule wall with the beta-tubulin subunit facing the microtubule plus end conferring a structural polarity. Microtubules usually have 13 protofilaments but different protofilament numbers can be found in some organisms and specialized cells. Mg(2+) serves as cofactor. Undergoes a tyrosination/detyrosination cycle, the cyclic removal and re-addition of a C-terminal tyrosine residue by the enzymes tubulin tyrosine carboxypeptidase (TTCP) and tubulin tyrosine ligase (TTL), respectively. Post-translationally, acetylation of alpha chains at Lys-40 stabilizes microtubules and affects affinity and processivity of microtubule motors. This modification has a role in multiple cellular functions, ranging from cell motility, cell cycle progression or cell differentiation to intracellular trafficking and signaling.

Its subcellular location is the cytoplasm. The protein localises to the cytoskeleton. The catalysed reaction is GTP + H2O = GDP + phosphate + H(+). Functionally, tubulin is the major constituent of microtubules, a cylinder consisting of laterally associated linear protofilaments composed of alpha- and beta-tubulin heterodimers. Microtubules grow by the addition of GTP-tubulin dimers to the microtubule end, where a stabilizing cap forms. Below the cap, tubulin dimers are in GDP-bound state, owing to GTPase activity of alpha-tubulin. This Paracentrotus lividus (Common sea urchin) protein is Tubulin alpha-1 chain.